Here is a 363-residue protein sequence, read N- to C-terminus: Ribonuclease D (363 aa).

Residues 5 to 168 form the 3'-5' exonuclease domain; the sequence is ITHPSELTDR…AIHDELTRRL (164 aa). Residues 208 to 288 form the HRDC domain; sequence EPAAQRRLLR…NTPLPDEEHA (81 aa).

This sequence belongs to the RNase D family. The cofactor is a divalent metal cation.

The protein resides in the cytoplasm. It catalyses the reaction Exonucleolytic cleavage that removes extra residues from the 3'-terminus of tRNA to produce 5'-mononucleotides.. Exonuclease involved in the 3' processing of various precursor tRNAs. Initiates hydrolysis at the 3'-terminus of an RNA molecule and releases 5'-mononucleotides. The polypeptide is Ribonuclease D (Xanthomonas oryzae pv. oryzae (strain KACC10331 / KXO85)).